The primary structure comprises 208 residues: Small ribosomal subunit protein uS4 (208 aa).

The S4 RNA-binding domain maps to 95-159; it reads RRIDNIVYRA…FKKLVRSNIE (65 aa).

The protein belongs to the universal ribosomal protein uS4 family. As to quaternary structure, part of the 30S ribosomal subunit. Contacts protein S5. The interaction surface between S4 and S5 is involved in control of translational fidelity.

Its function is as follows. One of the primary rRNA binding proteins, it binds directly to 16S rRNA where it nucleates assembly of the body of the 30S subunit. With S5 and S12 plays an important role in translational accuracy. This is Small ribosomal subunit protein uS4 from Borrelia recurrentis (strain A1).